Consider the following 201-residue polypeptide: B-cell CLL/lymphoma 7 protein family member A (201 aa).

Positions 46–201 (YKWVPVTEPK…GKIDSSSEES (156 aa)) are disordered. A compositionally biased stretch (basic and acidic residues) spans 54–71 (PKSDDNKNKKKGKDDKYG). Composition is skewed to polar residues over residues 73 to 83 (EVTTPENSSSP), 93 to 114 (SNQSSIADSSPLKQETSNNTSP), and 133 to 142 (QYPSKQPSSG). Basic and acidic residues predominate over residues 158–167 (TSKRDSKSQG). Residues 168–179 (DSESFLDSSKSA) are compositionally biased toward polar residues. Over residues 192-201 (GKIDSSSEES) the composition is skewed to basic and acidic residues.

Belongs to the BCL7 family.

The polypeptide is B-cell CLL/lymphoma 7 protein family member A (bcl7a) (Danio rerio (Zebrafish)).